The chain runs to 45 residues: Defensin Tk-AMP-D4 (45 aa).

Cystine bridges form between Cys-3–Cys-45, Cys-14–Cys-34, Cys-20–Cys-39, and Cys-24–Cys-41.

Functionally, plant defense peptide. This chain is Defensin Tk-AMP-D4, found in Triticum kiharae (Wheat).